Here is a 211-residue protein sequence, read N- to C-terminus: Ribonuclease HII (211 aa).

The RNase H type-2 domain maps to 17–211; it reads FLSAGVDEVG…CQPSLFEVRS (195 aa). Positions 23, 24, and 119 each coordinate a divalent metal cation.

The protein belongs to the RNase HII family. Mn(2+) is required as a cofactor. The cofactor is Mg(2+).

It localises to the cytoplasm. It carries out the reaction Endonucleolytic cleavage to 5'-phosphomonoester.. In terms of biological role, endonuclease that specifically degrades the RNA of RNA-DNA hybrids. In Trichodesmium erythraeum (strain IMS101), this protein is Ribonuclease HII.